The sequence spans 192 residues: Ribosome maturation factor RimM (192 aa).

The PRC barrel domain occupies 116–192 (PGEYYWVDLI…RIIVDWQPDY (77 aa)).

Belongs to the RimM family. Binds ribosomal protein uS19.

The protein resides in the cytoplasm. Functionally, an accessory protein needed during the final step in the assembly of 30S ribosomal subunit, possibly for assembly of the head region. Essential for efficient processing of 16S rRNA. May be needed both before and after RbfA during the maturation of 16S rRNA. It has affinity for free ribosomal 30S subunits but not for 70S ribosomes. This is Ribosome maturation factor RimM from Verminephrobacter eiseniae (strain EF01-2).